Consider the following 353-residue polypeptide: Inactive ubiquitin thioesterase OTULINL (353 aa).

A required for membrane binding region spans residues 1–80 (MKATRSAPRE…KWWIGYLQRK (80 aa)). One can recognise an OTU domain in the interval 125-353 (KCVRPVKRDN…NDHQYHIPVF (229 aa)).

This sequence belongs to the peptidase C65 family. Otulin subfamily. Does not bind ubiquitin or ubiquitin-like proteins.

The protein resides in the cytoplasm. The protein localises to the endoplasmic reticulum membrane. Its subcellular location is the nucleus envelope. In terms of biological role, lacks deubiquitinase activity. In Rattus norvegicus (Rat), this protein is Inactive ubiquitin thioesterase OTULINL.